A 1312-amino-acid chain; its full sequence is Kinesin-like protein KIF16B (1312 aa).

The Kinesin motor domain maps to 3–358 (SVKVAVRVRP…LRYANRAKNI (356 aa)). Position 102–109 (102–109 (GQTGSGKS)) interacts with ATP. Positions 366-425 (EDANVKLIRELRAEIARLKTLLAQGNQIALLDSPTALSMEEKLHQNEARVQELTKEWTNK) form a coiled coil. At Ser-398 the chain carries Phosphoserine. One can recognise an FHA domain in the interval 480-544 (VGREDASTEQ…LNQGAVILLG (65 aa)). A Phosphothreonine modification is found at Thr-577. Ser-582, Ser-838, Ser-1047, and Ser-1145 each carry phosphoserine. 2 coiled-coil regions span residues 835–913 (KLAS…LQNH) and 941–1073 (QVEK…KQKI). Residues 1177 to 1291 (DPIKISIPRY…KVGLTLSKHT (115 aa)) enclose the PX domain.

Belongs to the TRAFAC class myosin-kinesin ATPase superfamily. Kinesin family. As to quaternary structure, interacts with PTPN21. Interacts with RAB14.

Its subcellular location is the cytoplasm. It localises to the cytoskeleton. The protein resides in the early endosome membrane. The protein localises to the spindle. In terms of biological role, plus end-directed microtubule-dependent motor protein involved in endosome transport and receptor recycling and degradation. Regulates the plus end motility of early endosomes and the balance between recycling and degradation of receptors such as EGF receptor (EGFR) and FGF receptor (FGFR). Regulates the Golgi to endosome transport of FGFR-containing vesicles during early development, a key process for developing basement membrane and epiblast and primitive endoderm lineages during early postimplantation development. This chain is Kinesin-like protein KIF16B (Kif16b), found in Mus musculus (Mouse).